Here is a 994-residue protein sequence, read N- to C-terminus: E3 ubiquitin-protein ligase Arkadia (994 aa).

Residues Lys19, Lys28, Lys34, Lys47, Lys59, Lys73, Lys87, Lys96, and Lys110 each participate in a glycyl lysine isopeptide (Lys-Gly) (interchain with G-Cter in SUMO2) cross-link. Basic and acidic residues predominate over residues 66–89 (HLCDDSQKQEKEMNGNQQEQEKSL). The interval 66-106 (HLCDDSQKQEKEMNGNQQEQEKSLVVRKKRKSQQAGPSYVQ) is disordered. The segment at 120-191 (QHLGTPSDED…HKWPRTETES (72 aa)) is disordered. The span at 132–151 (SSFSDCLSSPSSSLHFGDSD) shows a compositional bias: low complexity. Residues 164–173 (RHSQTILNAK) show a composition bias toward polar residues. A Glycyl lysine isopeptide (Lys-Gly) (interchain with G-Cter in SUMO2) cross-link involves residue Lys173. The segment covering 174-184 (SRSHSARSHKW) has biased composition (basic residues). Residues Lys198 and Lys218 each participate in a glycyl lysine isopeptide (Lys-Gly) (interchain with G-Cter in SUMO2) cross-link. The tract at residues 212 to 277 (CRKRFVKNNS…SSSTEGEEDL (66 aa)) is disordered. Residues 234–247 (MQRKKREVLARRKY) show a composition bias toward basic residues. The interaction with AXIN1 stretch occupies residues 241–404 (VLARRKYALL…VPTTSARMES (164 aa)). Residues 252–271 (SSSSSSENDLSSESSSSSST) show a composition bias toward low complexity. Positions 300 to 304 (VVVIE) match the SUMO interaction motif 1 (SIM) motif. An SUMO interaction motif 2 (SIM) motif is present at residues 325–331 (EVEIVTV). Positions 337–371 (SRSTLGHSRSHWSQGSSSHASRPQEPRNRSRISTV) are disordered. Residues 347 to 357 (HWSQGSSSHAS) show a composition bias toward low complexity. The SUMO interaction motif 3 (SIM) signature appears at 382–386 (VVDLT). Disordered regions lie at residues 388–476 (DEDE…AMPR), 508–537 (HGHHFQHHHHHHHTPHPAVPVSPSFSDPAC), 610–684 (APSQ…VDYV), and 696–742 (ISSH…APPA). Residues 395–467 (VPTTSARMES…SRRTTSSAVT (73 aa)) are compositionally biased toward polar residues. The segment covering 508–522 (HGHHFQHHHHHHHTP) has biased composition (basic residues). A compositionally biased stretch (pro residues) spans 670–680 (NPPPQTQPPPQ). The ubiquitin binding stretch occupies residues 907–909 (YPH). Glycyl lysine isopeptide (Lys-Gly) (interchain with G-Cter in SUMO2) cross-links involve residues Lys923 and Lys927. Zn(2+)-binding residues include Cys942 and Cys945. The segment at 942–983 (CTICLSILEEGEDVRRLPCMHLFHQVCVDQWLITNKKCPICR) adopts an RING-type; atypical zinc-finger fold. Residues 957-961 (RLPCM) are ubiquitin binding. Residues His965 and Cys968 each contribute to the Zn(2+) site.

Belongs to the Arkadia family. As to quaternary structure, monomer. Interacts with SMAD6, SMAD7, AXIN1, AXIN2 and SKIL isoform SNON. Interacts with (phosphorylated) SMAD2 and SMAD3. Part of a complex containing RNF111, AXIN1 and SMAD7. Interacts (via SIM domains) with SUMO1 and SUMO2. In terms of tissue distribution, broadly expressed.

Its subcellular location is the nucleus. The protein localises to the cytoplasm. The protein resides in the PML body. The catalysed reaction is S-ubiquitinyl-[E2 ubiquitin-conjugating enzyme]-L-cysteine + [acceptor protein]-L-lysine = [E2 ubiquitin-conjugating enzyme]-L-cysteine + N(6)-ubiquitinyl-[acceptor protein]-L-lysine.. It functions in the pathway protein modification; protein ubiquitination. Its activity is regulated as follows. Binds free ubiquitin non-covalently via its RING-type zinc finger. Ubiquitin-binding leads to enhance the E3 ubiquitin-protein ligase activity by stabilizing the ubiquitin-conjugating enzyme E2 (donor ubiquitin) in the 'closed' conformation and activating ubiquitin transfer. In terms of biological role, E3 ubiquitin-protein ligase. Required for mesoderm patterning during embryonic development. Acts as an enhancer of the transcriptional responses of the SMAD2/SMAD3 effectors, which are activated downstream of BMP. Acts by mediating ubiquitination and degradation of SMAD inhibitors such as SMAD7, inducing their proteasomal degradation and thereby enhancing the transcriptional activity of TGF-beta and BMP. In addition to enhance transcription of SMAD2/SMAD3 effectors, also regulates their turnover by mediating their ubiquitination and subsequent degradation, coupling their activation with degradation, thereby ensuring that only effectors 'in use' are degraded. Activates SMAD3/SMAD4-dependent transcription by triggering signal-induced degradation of SNON isoform of SKIL. Associates with UBE2D2 as an E2 enzyme. Specifically binds polysumoylated chains via SUMO interaction motifs (SIMs) and mediates ubiquitination of sumoylated substrates. Catalyzes 'Lys-63'-linked ubiquitination of sumoylated XPC in response to UV irradiation, promoting nucleotide excision repair. Mediates ubiquitination and degradation of sumoylated PML. The regulation of the BMP-SMAD signaling is however independent of sumoylation and is not dependent of SUMO interaction motifs (SIMs). This chain is E3 ubiquitin-protein ligase Arkadia, found in Homo sapiens (Human).